A 308-amino-acid polypeptide reads, in one-letter code: MKSALLLLSYGSPERIEDLDEYLKNIFNGKPVPESVREENLRKYEMFGGRSPSNRIIESIARKLHEKIGDDMDVILAYKHWNPSIEEAVKGLGSYDNIVAIPLFSFYSQNVKDSYLNPLESALRRYGFSPRLEFVNGLANSDLFLPMWANIISEDASEDSFYLFDAHSLPAPDREEDYLFWLRYSTYKISQILGLSRSDFGFQGGHLGWLGPSIYDVLNRIDASKITVIPISFLYDHLEILYDLDYEFRKAVEAKGMHYRRVRMPNDSAMMVNMIERAARSAITHLSGEKINGSIIGQPRIADTDNGR.

Residues histidine 167 and glutamate 239 each coordinate Fe cation.

Belongs to the ferrochelatase family.

The protein resides in the cytoplasm. It catalyses the reaction heme b + 2 H(+) = protoporphyrin IX + Fe(2+). The protein operates within porphyrin-containing compound metabolism; protoheme biosynthesis; protoheme from protoporphyrin-IX: step 1/1. Catalyzes the ferrous insertion into protoporphyrin IX. This chain is Ferrochelatase, found in Thermoplasma acidophilum (strain ATCC 25905 / DSM 1728 / JCM 9062 / NBRC 15155 / AMRC-C165).